The sequence spans 44 residues: Peptide Hact-4 (44 aa).

3 cysteine pairs are disulfide-bonded: Cys8-Cys42, Cys15-Cys34, and Cys20-Cys43.

In terms of tissue distribution, expressed in tentacles.

Its subcellular location is the nematocyst. The protein localises to the secreted. Functionally, peptide with unknown function. Does not exhibit antimicrobial activity against Escherichia coli and Staphylococcus aureus. Does not exhibit any effect on human ion channel TRPV1 in a Xenopus laevis oocytes assay. The polypeptide is Peptide Hact-4 (Heliofungia actiniformis (Mushroom coral)).